A 1119-amino-acid polypeptide reads, in one-letter code: Protein translocase subunit SecA (1119 aa).

ATP contacts are provided by residues Gln175, 213–217 (GEGKT), and Asp714. Zn(2+) contacts are provided by Cys1106, Cys1108, Cys1117, and Cys1118.

It belongs to the SecA family. As to quaternary structure, monomer and homodimer. Part of the essential Sec protein translocation apparatus which comprises SecA, SecYEG and auxiliary proteins SecDF. Other proteins may also be involved. Requires Zn(2+) as cofactor.

The protein localises to the cell inner membrane. Its subcellular location is the cytoplasm. The catalysed reaction is ATP + H2O + cellular proteinSide 1 = ADP + phosphate + cellular proteinSide 2.. Its function is as follows. Part of the Sec protein translocase complex. Interacts with the SecYEG preprotein conducting channel. Has a central role in coupling the hydrolysis of ATP to the transfer of proteins into and across the cell membrane, serving as an ATP-driven molecular motor driving the stepwise translocation of polypeptide chains across the membrane. This Azobacteroides pseudotrichonymphae genomovar. CFP2 protein is Protein translocase subunit SecA.